The primary structure comprises 425 residues: MQTVIKNGTVYQNGRLIHADVLIEDQKIKAIGTDLTGDKVIDATGKLVSPGLVDVHVHYRDPGQTYKEDIETGSKAAAHGGFTTVGAMPNVTPVPDTPDLMKKMVQENKQKGIVHIFQYGPITKNETTDELPDYAALKKAGAFALSNDGHGVQTAQTMYLAMQEAKKNDLIVAAHAQDDSLFNHGIVNEGEKAKELNLPPVTELAETTQIARDLLLAEKTGVHYHICHVSTKTSVELVRMAKACGINVTCEAAPHHLLLTEDDIPKDNGYYKMNPPLRSKEDQAALLVGLLDGTIDLIATDHAPHAKQEKQGGMQNAAFGITGSETAFSTLYTKFVKEDKVFTLEQLLSWLSDQPAKVFGLKKAGVLEPGCPADVAIFDLEHETELKEKDYQSKGINTPFTGQKIYGATVMTMVDGEVVYQRGEK.

Zn(2+) is bound by residues His56 and His58. Residues 58-60 (HYR) and Asn90 each bind substrate. Asp148, His175, and His228 together coordinate Zn(2+). Asn274 lines the substrate pocket. Zn(2+) is bound at residue Asp301. Asp301 is a catalytic residue. Substrate is bound by residues His305 and 319 to 320 (FG).

This sequence belongs to the metallo-dependent hydrolases superfamily. DHOase family. Class I DHOase subfamily. Zn(2+) serves as cofactor.

It catalyses the reaction (S)-dihydroorotate + H2O = N-carbamoyl-L-aspartate + H(+). Its pathway is pyrimidine metabolism; UMP biosynthesis via de novo pathway; (S)-dihydroorotate from bicarbonate: step 3/3. Functionally, catalyzes the reversible cyclization of carbamoyl aspartate to dihydroorotate. The protein is Dihydroorotase of Lactobacillus helveticus (strain DPC 4571).